The following is a 331-amino-acid chain: Induced myeloid leukemia cell differentiation protein Mcl-1 homolog (331 aa).

The segment at 85–156 (LAVPPEEMAA…PPEEEEDDLY (72 aa)) is PEST-like. Phosphoserine is present on Ser102. Lys117 participates in a covalent cross-link: Glycyl lysine isopeptide (Lys-Gly) (interchain with G-Cter in ubiquitin). Positions 130–154 (EAAKSSGADGSLPSTPPPPEEEEDD) are disordered. Phosphoserine; by GSK3-alpha and GSK3-beta is present on Ser140. Ser143 carries the post-translational modification Phosphoserine. Residue Thr144 is modified to Phosphothreonine; by MAPK. Residues Lys175 and Lys178 each participate in a glycyl lysine isopeptide (Lys-Gly) (interchain with G-Cter in ubiquitin) cross-link. A BH3 motif is present at residues 190 to 204 (ALETLRRVGDGVQRN). Residues 234–253 (VFKDGVTNWGRIVTLISFGA) carry the BH1 motif. Positions 285 to 300 (DWLVKQRGWDGFVEFF) match the BH2 motif. The chain crosses the membrane as a helical span at residues 308–330 (GIRNVLLAFAGVAGVGAGLAYLI).

It belongs to the Bcl-2 family. In terms of assembly, interacts with HIF3A isoform 2 (via C-terminus domain). Interacts with BAD, BOK, BIK, BAX, BAK1, and TPT1. Interacts with BBC3, BMF and PMAIP1. Interacts with BOP. Interacts with BCL2L11; this interaction may sequester BCL2L11 and prevent its pro-apoptotic activity. Interacts with GIMAP5 and HSPA8/HSC70; the interaction between HSPA8 and MCL1 is impaired in the absence of GIMAP5. Post-translationally, cleaved by CASP3 during apoptosis, yielding a pro-apoptotic C-terminal fragment. In terms of processing, rapidly degraded in the absence of phosphorylation in the PEST region. Phosphorylated on Ser-140, by GSK3, in response to IL3/interleukin-3 withdrawal. Phosphorylation at Ser-140 induces ubiquitination and proteasomal degradation, abrogating the anti-apoptotic activity. Treatment with taxol or okadaic acid induces phosphorylation on additional sites. Post-translationally, ubiquitinated. Ubiquitination is induced by phosphorylation at Ser-140. Deubiquitinated by USP20; leading to increased stability.

It localises to the membrane. The protein resides in the cytoplasm. It is found in the mitochondrion. The protein localises to the nucleus. Its subcellular location is the nucleoplasm. Functionally, involved in the regulation of apoptosis versus cell survival, and in the maintenance of viability but not of proliferation. Mediates its effects by interactions with a number of other regulators of apoptosis. Isoform 2 has antiapoptotic activity. The chain is Induced myeloid leukemia cell differentiation protein Mcl-1 homolog (Mcl1) from Mus musculus (Mouse).